The chain runs to 383 residues: Transcription termination factor Rho (383 aa).

Residues 1–22 are disordered; sequence MTIETTTKKRPRAARPPRPRES. Positions 8–17 are enriched in basic residues; sequence KKRPRAARPP. The Rho RNA-BD domain occupies 26–93; it reads LETVAGLLDV…AEVESVNGST (68 aa). ATP is bound by residues 132-137, 144-149, and Arg-175; these read GKGQRG and KAGKTM.

It belongs to the Rho family. Homohexamer. The homohexamer assembles into an open ring structure.

Its function is as follows. Facilitates transcription termination by a mechanism that involves Rho binding to the nascent RNA, activation of Rho's RNA-dependent ATPase activity, and release of the mRNA from the DNA template. The sequence is that of Transcription termination factor Rho from Streptosporangium roseum (strain ATCC 12428 / DSM 43021 / JCM 3005 / KCTC 9067 / NCIMB 10171 / NRRL 2505 / NI 9100).